Reading from the N-terminus, the 523-residue chain is Sugar carrier protein C (523 aa).

Residues 1 to 25 (MPAVGGIPPSGGNRKVYPGNLTLYV) are Cytoplasmic-facing. 12 consecutive transmembrane segments (helical) span residues 26–46 (TVTC…IGIS), 86–106 (MFTS…STIT), 120–140 (VLFC…MLIL), 143–163 (ILLG…LSEM), 172–192 (LNIG…VLNY), 205–225 (LSLG…LVLP), 298–320 (LTGI…FGSD), 327–347 (VITG…VDKW), 351–371 (FLFL…AACI), 387–407 (WYAV…AWSW), 433–453 (SVNM…LCHL), and 456–476 (GLFI…YYFL). Residues 477-523 (PETKGIPIEEMGQVWKQHWYWSRYVVDEDYPNGGLEMGKEGRIPKNV) are Cytoplasmic-facing.

The protein belongs to the major facilitator superfamily. Sugar transporter (TC 2.A.1.1) family.

The protein resides in the membrane. This chain is Sugar carrier protein C (STC), found in Ricinus communis (Castor bean).